The primary structure comprises 296 residues: Phosphatidylserine decarboxylase proenzyme (296 aa).

Catalysis depends on charge relay system; for autoendoproteolytic cleavage activity residues D113, H169, and S256. The Schiff-base intermediate with substrate; via pyruvic acid; for decarboxylase activity role is filled by S256. The residue at position 256 (S256) is a Pyruvic acid (Ser); by autocatalysis.

The protein belongs to the phosphatidylserine decarboxylase family. PSD-B subfamily. Prokaryotic type II sub-subfamily. As to quaternary structure, heterodimer of a large membrane-associated beta subunit and a small pyruvoyl-containing alpha subunit. Pyruvate serves as cofactor. Post-translationally, is synthesized initially as an inactive proenzyme. Formation of the active enzyme involves a self-maturation process in which the active site pyruvoyl group is generated from an internal serine residue via an autocatalytic post-translational modification. Two non-identical subunits are generated from the proenzyme in this reaction, and the pyruvate is formed at the N-terminus of the alpha chain, which is derived from the carboxyl end of the proenzyme. The autoendoproteolytic cleavage occurs by a canonical serine protease mechanism, in which the side chain hydroxyl group of the serine supplies its oxygen atom to form the C-terminus of the beta chain, while the remainder of the serine residue undergoes an oxidative deamination to produce ammonia and the pyruvoyl prosthetic group on the alpha chain. During this reaction, the Ser that is part of the protease active site of the proenzyme becomes the pyruvoyl prosthetic group, which constitutes an essential element of the active site of the mature decarboxylase.

It is found in the cell membrane. It catalyses the reaction a 1,2-diacyl-sn-glycero-3-phospho-L-serine + H(+) = a 1,2-diacyl-sn-glycero-3-phosphoethanolamine + CO2. It participates in phospholipid metabolism; phosphatidylethanolamine biosynthesis; phosphatidylethanolamine from CDP-diacylglycerol: step 2/2. In terms of biological role, catalyzes the formation of phosphatidylethanolamine (PtdEtn) from phosphatidylserine (PtdSer). The polypeptide is Phosphatidylserine decarboxylase proenzyme (Clostridium kluyveri (strain ATCC 8527 / DSM 555 / NBRC 12016 / NCIMB 10680 / K1)).